The following is a 67-amino-acid chain: Surface composition regulator (67 aa).

The protein belongs to the GlgS family.

Its function is as follows. Major determinant of cell surface composition. Negatively regulates motility, adhesion and synthesis of biofilm exopolysaccharides. The polypeptide is Surface composition regulator (Salmonella paratyphi A (strain ATCC 9150 / SARB42)).